The following is a 483-amino-acid chain: Glutamyl-tRNA(Gln) amidotransferase subunit A (483 aa).

Catalysis depends on charge relay system residues Lys76 and Ser151. Ser175 acts as the Acyl-ester intermediate in catalysis.

This sequence belongs to the amidase family. GatA subfamily. As to quaternary structure, heterotrimer of A, B and C subunits.

The catalysed reaction is L-glutamyl-tRNA(Gln) + L-glutamine + ATP + H2O = L-glutaminyl-tRNA(Gln) + L-glutamate + ADP + phosphate + H(+). Allows the formation of correctly charged Gln-tRNA(Gln) through the transamidation of misacylated Glu-tRNA(Gln) in organisms which lack glutaminyl-tRNA synthetase. The reaction takes place in the presence of glutamine and ATP through an activated gamma-phospho-Glu-tRNA(Gln). This is Glutamyl-tRNA(Gln) amidotransferase subunit A from Ectopseudomonas mendocina (strain ymp) (Pseudomonas mendocina).